Here is a 378-residue protein sequence, read N- to C-terminus: GDP-mannose 3,5-epimerase 1 (378 aa).

NAD(+)-binding positions include 36-62 (GAGG…SDWK), aspartate 60, and aspartate 80. Residues glycine 105 and 145–147 (SAC) contribute to the substrate site. NAD(+) is bound by residues tyrosine 175 and lysine 179. Tyrosine 175 serves as the catalytic Proton acceptor. Substrate is bound by residues asparagine 204, 217 to 219 (EKA), lysine 226, 242 to 244 (QTR), arginine 307, and serine 357.

It belongs to the NAD(P)-dependent epimerase/dehydratase family. As to quaternary structure, homodimer. The cofactor is NAD(+).

It carries out the reaction GDP-alpha-D-mannose = GDP-beta-L-gulose. It catalyses the reaction GDP-beta-L-gulose = GDP-beta-L-galactose. The protein operates within cofactor biosynthesis; L-ascorbate biosynthesis via GDP-alpha-D-mannose pathway; L-ascorbate from GDP-alpha-D-mannose: step 1/5. In terms of biological role, catalyzes a reversible epimerization of GDP-D-mannose that precedes the committed step in the biosynthesis of vitamin C (L-ascorbate), resulting in the hydrolysis of the highly energetic glycosyl-pyrophosphoryl linkage. Able to catalyze 2 distinct epimerization reactions and can release both GDP-L-galactose and GDP-L-gulose from GDP-mannose. The sequence is that of GDP-mannose 3,5-epimerase 1 from Oryza sativa subsp. indica (Rice).